A 171-amino-acid chain; its full sequence is Peptide deformylase (171 aa).

Fe cation-binding residues include cysteine 87 and histidine 129. Glutamate 130 is a catalytic residue. Histidine 133 provides a ligand contact to Fe cation.

This sequence belongs to the polypeptide deformylase family. It depends on Fe(2+) as a cofactor.

It carries out the reaction N-terminal N-formyl-L-methionyl-[peptide] + H2O = N-terminal L-methionyl-[peptide] + formate. In terms of biological role, removes the formyl group from the N-terminal Met of newly synthesized proteins. Requires at least a dipeptide for an efficient rate of reaction. N-terminal L-methionine is a prerequisite for activity but the enzyme has broad specificity at other positions. This Pseudothermotoga lettingae (strain ATCC BAA-301 / DSM 14385 / NBRC 107922 / TMO) (Thermotoga lettingae) protein is Peptide deformylase.